We begin with the raw amino-acid sequence, 297 residues long: Protease HtpX homolog (297 aa).

A run of 2 helical transmembrane segments spans residues 14–34 and 39–59; these read IFLI…AGYL and YQFG…SMIF. Position 143 (H143) interacts with Zn(2+). E144 is a catalytic residue. A Zn(2+)-binding site is contributed by H147. Helical transmembrane passes span 153-173 and 196-216; these read IRIS…ASMG and IVFL…ASMV. E225 lines the Zn(2+) pocket.

The protein belongs to the peptidase M48B family. Zn(2+) is required as a cofactor.

The protein localises to the cell membrane. The chain is Protease HtpX homolog from Streptococcus uberis (strain ATCC BAA-854 / 0140J).